The chain runs to 229 residues: Adenosylcobinamide-GDP ribazoletransferase (229 aa).

Transmembrane regions (helical) follow at residues 31–51 (AMLL…AVLA), 55–75 (AVEL…AASS), 111–131 (AGVL…ATLL), 134–154 (PLLA…VCCT), 176–196 (VAVL…LVLV), and 208–228 (GDVM…AWAA).

The protein belongs to the CobS family. The cofactor is Mg(2+).

Its subcellular location is the cell membrane. It catalyses the reaction alpha-ribazole + adenosylcob(III)inamide-GDP = adenosylcob(III)alamin + GMP + H(+). It carries out the reaction alpha-ribazole 5'-phosphate + adenosylcob(III)inamide-GDP = adenosylcob(III)alamin 5'-phosphate + GMP + H(+). The protein operates within cofactor biosynthesis; adenosylcobalamin biosynthesis; adenosylcobalamin from cob(II)yrinate a,c-diamide: step 7/7. Joins adenosylcobinamide-GDP and alpha-ribazole to generate adenosylcobalamin (Ado-cobalamin). Also synthesizes adenosylcobalamin 5'-phosphate from adenosylcobinamide-GDP and alpha-ribazole 5'-phosphate. The polypeptide is Adenosylcobinamide-GDP ribazoletransferase (Nocardioides sp. (strain ATCC BAA-499 / JS614)).